The chain runs to 176 residues: Peptide methionine sulfoxide reductase MsrA (176 aa).

Cys-10 is an active-site residue.

The protein belongs to the MsrA Met sulfoxide reductase family.

It catalyses the reaction L-methionyl-[protein] + [thioredoxin]-disulfide + H2O = L-methionyl-(S)-S-oxide-[protein] + [thioredoxin]-dithiol. The catalysed reaction is [thioredoxin]-disulfide + L-methionine + H2O = L-methionine (S)-S-oxide + [thioredoxin]-dithiol. In terms of biological role, has an important function as a repair enzyme for proteins that have been inactivated by oxidation. Catalyzes the reversible oxidation-reduction of methionine sulfoxide in proteins to methionine. The polypeptide is Peptide methionine sulfoxide reductase MsrA (Sulfolobus acidocaldarius (strain ATCC 33909 / DSM 639 / JCM 8929 / NBRC 15157 / NCIMB 11770)).